The sequence spans 443 residues: MSEMTPREIVSELDQHIIGQADAKRAVAIALRNRWRRMQLQEPLRHEVTPKNILMIGPTGVGKTEIARRLAKLANAPFIKVEATKFTEVGYVGKEVDSIIRDLTDSAMKLVRQTEIEKNRFRAEEAAEDRILDALLPPAKNQWGQVETTDSNNTTRQVFRKKLREGQLDDKEIDIDVAAPSMGVEIMAPPGMEEMTNQLQSMFQNLSSGQTKKRKMKIKDALKTLIDDEAAKLINPEDLKQKAIDAVEQNGIVFIDEIDKICKKGEYSGADVSREGVQRDLLPLVEGTTVSTKHGMVKTDHILFIASGAFQVARPSDLIPELQGRLPIRVELSALSAVDFERILTEPNASLTEQYKALMATEGVNIEFTGESIKKIAEAAFRVNEKTENIGARRLHTVMERLMDKISFNASDMQGQVVRIDEAYVMDALGDVVENEDLSRFIL.

Residues Ile-18, 60–65 (GVGKTE), Asp-256, Glu-321, and Arg-393 contribute to the ATP site.

Belongs to the ClpX chaperone family. HslU subfamily. A double ring-shaped homohexamer of HslV is capped on each side by a ring-shaped HslU homohexamer. The assembly of the HslU/HslV complex is dependent on binding of ATP.

The protein resides in the cytoplasm. Its function is as follows. ATPase subunit of a proteasome-like degradation complex; this subunit has chaperone activity. The binding of ATP and its subsequent hydrolysis by HslU are essential for unfolding of protein substrates subsequently hydrolyzed by HslV. HslU recognizes the N-terminal part of its protein substrates and unfolds these before they are guided to HslV for hydrolysis. The protein is ATP-dependent protease ATPase subunit HslU of Pasteurella multocida (strain Pm70).